Reading from the N-terminus, the 304-residue chain is MAPLAARRPACLLALLSVAAALFLTPTALAAGGKTGQVTVFWGRNKAEGSLREACDSGMYTMVTMSFLDVFGANGKYHLDLSGHDLSSVGADIKHCQSKGVPVSLSIGGYGTGYSLPSNRSALDLFDHLWNSYFGGSKPSVPRPFGDAWLDGVDLFLEHGTPADRYDVLALELAKHNIRGGPGKPLHLTATVRCGYPPAAHVGRALATGIFERVHVRTYESDKWCNQNLGWEGSWDKWTAAYPATRFYVGLTADDKSHQWVHPKNVYYGVAPVAQKKDNYGGIMLWDRYFDKQTNYSSLIKYYA.

Residues M1 to A30 form the signal peptide. One can recognise a GH18 domain in the interval G36–A304. C55 and C96 are disulfide-bonded. A glycan (N-linked (GlcNAc...) asparagine) is linked at N119. E158 functions as the Proton donor in the catalytic mechanism. The tract at residues I178–K184 is interaction with fungal GH11 xylanase. A disulfide bridge connects residues C194 and C225. The tract at residues H262 to Q275 is interaction with fungal GH10 xylanase. Residue N295 is glycosylated (N-linked (GlcNAc...) asparagine).

The protein belongs to the glycosyl hydrolase 18 family. Xylanase inhibitor subfamily. As to quaternary structure, binds to fungal GH10 and GH11 xylanases. Also forms a ternary complex with barley alpha-amylase 1 (AMY1) and insoluble starch.

It localises to the secreted. Functionally, fungal xylanase inhibitor. Possesses competitive inhibiting activity against fungal endo-1,4-beta-D-xylanases belonging to glycoside hydrolase family 10 (GH10) and family 11 (GH11). Possesses also inhibitory activity towards barley alpha-amylases. Binding to xylanases or amylases is necessary for inhibition activity. May function in plant defense against secreted fungal pathogen xylanases. Is similar to class III chitinases, but does not exhibit chitinase activity. The protein is Xylanase inhibitor protein 1 of Triticum aestivum (Wheat).